We begin with the raw amino-acid sequence, 194 residues long: Potassium-transporting ATPase KdpC subunit (194 aa).

A helical membrane pass occupies residues 12–34 (LFLLLLTGGVYPLLTTALGQWWF).

Belongs to the KdpC family. The system is composed of three essential subunits: KdpA, KdpB and KdpC.

It localises to the cell inner membrane. Functionally, part of the high-affinity ATP-driven potassium transport (or Kdp) system, which catalyzes the hydrolysis of ATP coupled with the electrogenic transport of potassium into the cytoplasm. This subunit acts as a catalytic chaperone that increases the ATP-binding affinity of the ATP-hydrolyzing subunit KdpB by the formation of a transient KdpB/KdpC/ATP ternary complex. This is Potassium-transporting ATPase KdpC subunit from Salmonella heidelberg (strain SL476).